The primary structure comprises 58 residues: Small ribosomal subunit protein bS21 (58 aa).

Residues 34-58 form a disordered region; that stretch reads KREHYEKPSVKRKKKSEAARKRKFK. Positions 43 to 58 are enriched in basic residues; it reads VKRKKKSEAARKRKFK.

This sequence belongs to the bacterial ribosomal protein bS21 family.

In Clostridium acetobutylicum (strain ATCC 824 / DSM 792 / JCM 1419 / IAM 19013 / LMG 5710 / NBRC 13948 / NRRL B-527 / VKM B-1787 / 2291 / W), this protein is Small ribosomal subunit protein bS21.